Here is a 448-residue protein sequence, read N- to C-terminus: Acetate kinase (448 aa).

Asn-7 serves as a coordination point for Mg(2+). Lys-14 contacts ATP. Residue Arg-91 participates in substrate binding. The Proton donor/acceptor role is filled by Asp-148. ATP is bound by residues 208 to 212 (HIGNG) and 283 to 285 (DRR). Glu-388 serves as a coordination point for Mg(2+).

Belongs to the acetokinase family. As to quaternary structure, homodimer. The cofactor is Mg(2+). Requires Mn(2+) as cofactor.

It localises to the cytoplasm. It catalyses the reaction acetate + ATP = acetyl phosphate + ADP. The protein operates within metabolic intermediate biosynthesis; acetyl-CoA biosynthesis; acetyl-CoA from acetate: step 1/2. Its function is as follows. Catalyzes the formation of acetyl phosphate from acetate and ATP. Can also catalyze the reverse reaction. The protein is Acetate kinase of Treponema pallidum (strain Nichols).